The following is an 85-amino-acid chain: Putative membrane protein insertion efficiency factor (85 aa).

Residues 66-85 (PLNSGGDDPVPPKLDDNREH) form a disordered region.

The protein belongs to the UPF0161 family.

It is found in the cell inner membrane. In terms of biological role, could be involved in insertion of integral membrane proteins into the membrane. This chain is Putative membrane protein insertion efficiency factor, found in Yersinia pestis bv. Antiqua (strain Antiqua).